A 315-amino-acid polypeptide reads, in one-letter code: 1-aminocyclopropane-1-carboxylate oxidase 1 (315 aa).

In terms of domain architecture, Fe2OG dioxygenase spans Pro153–Pro253. Residues His177, Asp179, and His234 each contribute to the Fe cation site.

Belongs to the iron/ascorbate-dependent oxidoreductase family. It depends on Fe cation as a cofactor. Predominantly expressed in the petals and the stigma and style.

It carries out the reaction 1-aminocyclopropane-1-carboxylate + L-ascorbate + O2 = ethene + L-dehydroascorbate + hydrogen cyanide + CO2 + 2 H2O. It participates in alkene biosynthesis; ethylene biosynthesis via S-adenosyl-L-methionine; ethylene from S-adenosyl-L-methionine: step 2/2. The protein is 1-aminocyclopropane-1-carboxylate oxidase 1 (ACO1) of Solanum lycopersicum (Tomato).